The primary structure comprises 106 residues: Replication protein A 14 kDa subunit B (106 aa).

Met1 carries the N-acetylmethionine modification.

It belongs to the replication factor A protein 3 family. Component of the heterotrimeric canonical replication protein A complex (RPA).

It is found in the nucleus. Its function is as follows. As part of the replication protein A (RPA/RP-A), a single-stranded DNA-binding heterotrimeric complex, may play an essential role in DNA replication, recombination and repair. Binds and stabilizes single-stranded DNA intermediates, preventing complementary DNA reannealing and recruiting different proteins involved in DNA metabolism. This chain is Replication protein A 14 kDa subunit B (RPA3B), found in Arabidopsis thaliana (Mouse-ear cress).